Reading from the N-terminus, the 230-residue chain is Ion-translocating oxidoreductase complex subunit E (230 aa).

6 helical membrane-spanning segments follow: residues 18–38 (ALVQ…ATNA), 39–59 (LGLG…VSAL), 63–83 (TPAE…VSAV), 86–106 (LINA…PLIV), 125–145 (WLSA…MFVL), and 182–202 (PFLL…MLAV).

The protein belongs to the NqrDE/RnfAE family. The complex is composed of six subunits: RsxA, RsxB, RsxC, RsxD, RsxE and RsxG.

The protein localises to the cell inner membrane. In terms of biological role, part of a membrane-bound complex that couples electron transfer with translocation of ions across the membrane. Required to maintain the reduced state of SoxR. In Salmonella dublin (strain CT_02021853), this protein is Ion-translocating oxidoreductase complex subunit E.